The chain runs to 339 residues: Thermospermine synthase ACAULIS5 (339 aa).

In terms of domain architecture, PABS spans 33 to 270 (CHWYEETIDD…DTWGWVMASD (238 aa)). S-adenosyl 3-(methylsulfanyl)propylamine is bound by residues Gln62, Glu117, Asp137, and 168–169 (DA). Asp186 (proton acceptor) is an active-site residue.

The protein belongs to the spermidine/spermine synthase family. Highly expressed in stem internodes and roots. Lower levels in young seedlings before flowering and rosette leaves. Expressed in the vascular tissues. Restricted to procambial and/or provascular cells during primary root development and early leaves development.

It carries out the reaction S-adenosyl 3-(methylsulfanyl)propylamine + spermidine = thermospermine + S-methyl-5'-thioadenosine + H(+). In terms of biological role, required for correct xylem specification through regulation of the lifetime of the xylem elements. Prevents premature death of the xylem vessel elements. The polypeptide is Thermospermine synthase ACAULIS5 (ACL5) (Arabidopsis thaliana (Mouse-ear cress)).